A 305-amino-acid chain; its full sequence is Orotidine 5'-phosphate decarboxylase (305 aa).

Residue K108 is the Proton donor of the active site.

This sequence belongs to the OMP decarboxylase family. Type 2 subfamily.

The catalysed reaction is orotidine 5'-phosphate + H(+) = UMP + CO2. Its pathway is pyrimidine metabolism; UMP biosynthesis via de novo pathway; UMP from orotate: step 2/2. This Caldicellulosiruptor saccharolyticus (strain ATCC 43494 / DSM 8903 / Tp8T 6331) protein is Orotidine 5'-phosphate decarboxylase.